The chain runs to 234 residues: Orotate phosphoribosyltransferase (234 aa).

Lysine 30 provides a ligand contact to 5-phospho-alpha-D-ribose 1-diphosphate. 38-39 (FF) contributes to the orotate binding site. 5-phospho-alpha-D-ribose 1-diphosphate contacts are provided by residues 76 to 77 (YK), arginine 103, lysine 104, lysine 107, histidine 109, and 128 to 136 (DDVITAGTA). Orotate contacts are provided by threonine 132 and arginine 160.

This sequence belongs to the purine/pyrimidine phosphoribosyltransferase family. PyrE subfamily. Homodimer. Requires Mg(2+) as cofactor.

The catalysed reaction is orotidine 5'-phosphate + diphosphate = orotate + 5-phospho-alpha-D-ribose 1-diphosphate. Its pathway is pyrimidine metabolism; UMP biosynthesis via de novo pathway; UMP from orotate: step 1/2. Functionally, catalyzes the transfer of a ribosyl phosphate group from 5-phosphoribose 1-diphosphate to orotate, leading to the formation of orotidine monophosphate (OMP). In Chromohalobacter salexigens (strain ATCC BAA-138 / DSM 3043 / CIP 106854 / NCIMB 13768 / 1H11), this protein is Orotate phosphoribosyltransferase.